The primary structure comprises 338 residues: Ketol-acid reductoisomerase (NADP(+)) (338 aa).

A KARI N-terminal Rossmann domain is found at 1–181; sequence MNVFYDKDAD…GGGRAGIIET (181 aa). NADP(+) contacts are provided by residues 24-27, Arg-47, and Ser-52; that span reads YGSQ. Residue His-107 is part of the active site. Gly-133 is a binding site for NADP(+). One can recognise a KARI C-terminal knotted domain in the interval 182–327; sequence NFREETETDL…AKLRAMMPWI (146 aa). Positions 190, 194, 226, and 230 each coordinate Mg(2+). Ser-251 contributes to the substrate binding site.

Belongs to the ketol-acid reductoisomerase family. Requires Mg(2+) as cofactor.

It catalyses the reaction (2R)-2,3-dihydroxy-3-methylbutanoate + NADP(+) = (2S)-2-acetolactate + NADPH + H(+). It carries out the reaction (2R,3R)-2,3-dihydroxy-3-methylpentanoate + NADP(+) = (S)-2-ethyl-2-hydroxy-3-oxobutanoate + NADPH + H(+). Its pathway is amino-acid biosynthesis; L-isoleucine biosynthesis; L-isoleucine from 2-oxobutanoate: step 2/4. It functions in the pathway amino-acid biosynthesis; L-valine biosynthesis; L-valine from pyruvate: step 2/4. Functionally, involved in the biosynthesis of branched-chain amino acids (BCAA). Catalyzes an alkyl-migration followed by a ketol-acid reduction of (S)-2-acetolactate (S2AL) to yield (R)-2,3-dihydroxy-isovalerate. In the isomerase reaction, S2AL is rearranged via a Mg-dependent methyl migration to produce 3-hydroxy-3-methyl-2-ketobutyrate (HMKB). In the reductase reaction, this 2-ketoacid undergoes a metal-dependent reduction by NADPH to yield (R)-2,3-dihydroxy-isovalerate. This is Ketol-acid reductoisomerase (NADP(+)) from Burkholderia lata (strain ATCC 17760 / DSM 23089 / LMG 22485 / NCIMB 9086 / R18194 / 383).